Here is a 102-residue protein sequence, read N- to C-terminus: Alpha-hemoglobin-stabilizing protein (102 aa).

This sequence belongs to the AHSP family. As to quaternary structure, monomer. Forms a heterodimer with free alpha-hemoglobin. Does not bind beta-hemoglobin nor alpha(2)beta(2) hemoglobin A. In terms of tissue distribution, expressed in blood and bone marrow.

It is found in the cytoplasm. Acts as a chaperone to prevent the harmful aggregation of alpha-hemoglobin during normal erythroid cell development. Specifically protects free alpha-hemoglobin from precipitation. It is predicted to modulate pathological states of alpha-hemoglobin excess such as beta-thalassemia. The protein is Alpha-hemoglobin-stabilizing protein (AHSP) of Homo sapiens (Human).